A 144-amino-acid chain; its full sequence is Group IID secretory phospholipase A2 (144 aa).

The N-terminal stretch at 1–19 (MRLALLCGLLLAGITATQG) is a signal peptide. Intrachain disulfides connect Cys45/Cys137, Cys47/Cys63, Cys62/Cys117, Cys68/Cys144, Cys69/Cys110, Cys78/Cys103, and Cys96/Cys108. Residues His46, Gly48, and Gly50 each coordinate Ca(2+). His66 is a catalytic residue. A Ca(2+)-binding site is contributed by Asp67. N-linked (GlcNAc...) asparagine glycosylation is present at Asn99. Asp111 is a catalytic residue.

Belongs to the phospholipase A2 family. Ca(2+) serves as cofactor. As to expression, highly expressed in secondary lymphoid tissues, spleen and lymph nodes. Expressed at a lesser extent in thymus. Expressed in CD4-positive, IL2RA/CD25-positive, FOXP3-positive Tregs (at protein level). Expressed in myeloid cell subsets resident in spleen and lymph nodes, ITGAX/CD11C-positive dendritic cells and macrophages (at protein level). Enriched in CD4-positive, ITGAM/CD11B-positive dendritic cell subset. Expressed in pulmonary ITGAX/CD11C-positive dendritic cell subset (at protein level).

It localises to the secreted. Its subcellular location is the cell membrane. The protein localises to the cytoplasm. It carries out the reaction a 1,2-diacyl-sn-glycero-3-phosphoethanolamine + H2O = a 1-acyl-sn-glycero-3-phosphoethanolamine + a fatty acid + H(+). The enzyme catalyses 1-hexadecanoyl-2-(9Z-octadecenoyl)-sn-glycero-3-phosphoethanolamine + H2O = 1-hexadecanoyl-sn-glycero-3-phosphoethanolamine + (9Z)-octadecenoate + H(+). The catalysed reaction is 1-hexadecanoyl-2-(9Z,12Z-octadecadienoyl)-sn-glycero-3-phosphoethanolamine + H2O = 1-hexadecanoyl-sn-glycero-3-phosphoethanolamine + (9Z,12Z)-octadecadienoate + H(+). It catalyses the reaction 1,2-dihexadecanoyl-sn-glycero-3-phospho-(1'-sn-glycerol) + H2O = 1-hexadecanoyl-sn-glycero-3-phospho-(1'-sn-glycerol) + hexadecanoate + H(+). It carries out the reaction 1-hexadecanoyl-2-(9Z-octadecenoyl)-sn-glycero-3-phospho-(1'-sn-glycerol) + H2O = 1-hexadecanoyl-sn-glycero-3-phospho-(1'-sn-glycerol) + (9Z)-octadecenoate + H(+). The enzyme catalyses a 1,2-diacyl-sn-glycero-3-phosphocholine + H2O = a 1-acyl-sn-glycero-3-phosphocholine + a fatty acid + H(+). The catalysed reaction is 1,2-dihexadecanoyl-sn-glycero-3-phosphocholine + H2O = 1-hexadecanoyl-sn-glycero-3-phosphocholine + hexadecanoate + H(+). It catalyses the reaction 1-hexadecanoyl-2-(9Z-octadecenoyl)-sn-glycero-3-phosphocholine + H2O = 1-hexadecanoyl-sn-glycero-3-phosphocholine + (9Z)-octadecenoate + H(+). It carries out the reaction 1-hexadecanoyl-2-(9Z,12Z-octadecadienoyl)-sn-glycero-3-phosphocholine + H2O = (9Z,12Z)-octadecadienoate + 1-hexadecanoyl-sn-glycero-3-phosphocholine + H(+). The enzyme catalyses 1-hexadecanoyl-2-(4Z,7Z,10Z,13Z,16Z,19Z-docosahexaenoyl)-sn-glycero-3-phosphocholine + H2O = (4Z,7Z,10Z,13Z,16Z,19Z)-docosahexaenoate + 1-hexadecanoyl-sn-glycero-3-phosphocholine + H(+). Its function is as follows. Secretory calcium-dependent phospholipase A2 that primarily targets extracellular lipids, exerting anti-inflammatory and immunosuppressive functions. Hydrolyzes the ester bond of the fatty acyl group attached at sn-2 position of phospholipids (phospholipase A2 activity) with preference for phosphatidylethanolamines and phosphatidylglycerols over phosphatidylcholines. In draining lymph nodes, selectively hydrolyzes diacyl and alkenyl forms of phosphatidylethanolamines, releasing omega-3 polyunsaturated fatty acids (PUFAs) such as eicosapentaenoate and docosahexaenoate that are precursors of the anti-inflammatory lipid mediators, resolvins. During the resolution phase of acute inflammation drives docosahexaenoate-derived resolvin D1 synthesis, which suppresses dendritic cell activation and T-helper 1 immune response. May act in an autocrine and paracrine manner. Via a mechanism independent of its catalytic activity, promotes differentiation of regulatory T cells (Tregs) and participates in the maintenance of immune tolerance. May contribute to lipid remodeling of cellular membranes and generation of lipid mediators involved in pathogen clearance. Displays bactericidal activity against Gram-positive bacteria by directly hydrolyzing phospholipids of the bacterial membrane. This chain is Group IID secretory phospholipase A2 (Pla2g2d), found in Mus musculus (Mouse).